Here is a 315-residue protein sequence, read N- to C-terminus: Glycine--tRNA ligase alpha subunit (315 aa).

Belongs to the class-II aminoacyl-tRNA synthetase family. In terms of assembly, tetramer of two alpha and two beta subunits.

It localises to the cytoplasm. It carries out the reaction tRNA(Gly) + glycine + ATP = glycyl-tRNA(Gly) + AMP + diphosphate. The chain is Glycine--tRNA ligase alpha subunit from Pseudomonas paraeruginosa (strain DSM 24068 / PA7) (Pseudomonas aeruginosa (strain PA7)).